A 306-amino-acid chain; its full sequence is Hydroxypyruvate reductase (306 aa).

NAD(+)-binding positions include 152 to 153 (NI), Asp172, 228 to 230 (TAR), and Asp254. The active site involves Arg230. Glu259 is a catalytic residue. The Proton donor role is filled by His280. 280–283 (HIGA) is a binding site for NAD(+).

This sequence belongs to the D-isomer specific 2-hydroxyacid dehydrogenase family.

The enzyme catalyses (R)-glycerate + NAD(+) = 3-hydroxypyruvate + NADH + H(+). The catalysed reaction is (R)-glycerate + NADP(+) = 3-hydroxypyruvate + NADPH + H(+). In terms of biological role, involved in the degradation of L-serine via 3-hydroxypyruvate. Catalyzes the non-reversible reduction of 3-hydroxypyruvate to yield D-glycerate. This chain is Hydroxypyruvate reductase, found in Thermotoga maritima (strain ATCC 43589 / DSM 3109 / JCM 10099 / NBRC 100826 / MSB8).